Here is a 380-residue protein sequence, read N- to C-terminus: Forkhead box protein F1 (380 aa).

Over residues 1 to 19 (MTAEVQQPSVQTPAHSSPM) the composition is skewed to polar residues. The tract at residues 1-49 (MTAEVQQPSVQTPAHSSPMTEKPVQTPVMETSSSSSSTKAKKTNAGIRR) is disordered. The fork-head DNA-binding region spans 52-146 (KPPYSYIALI…EEGSFRRRPR (95 aa)).

Its subcellular location is the nucleus. The polypeptide is Forkhead box protein F1 (foxf1) (Danio rerio (Zebrafish)).